The sequence spans 540 residues: CTP synthase (540 aa).

Residues 1-270 (MNNLTSTKFI…DTQILKHFNI (270 aa)) are amidoligase domain. S18 contributes to the CTP binding site. S18 provides a ligand contact to UTP. ATP-binding positions include 19–24 (SLGKGL) and D76. Residues D76 and E144 each coordinate Mg(2+). CTP-binding positions include 151-153 (DIE), 191-196 (KTKPTQ), and K227. Residues 191-196 (KTKPTQ) and K227 each bind UTP. The Glutamine amidotransferase type-1 domain maps to 295–537 (TIAIIGKYIK…VQASLNYQET (243 aa)). Position 356 (G356) interacts with L-glutamine. C383 serves as the catalytic Nucleophile; for glutamine hydrolysis. Residues 384-387 (MGMQ), E407, and R462 each bind L-glutamine. Catalysis depends on residues H510 and E512.

This sequence belongs to the CTP synthase family. In terms of assembly, homotetramer.

The enzyme catalyses UTP + L-glutamine + ATP + H2O = CTP + L-glutamate + ADP + phosphate + 2 H(+). The catalysed reaction is L-glutamine + H2O = L-glutamate + NH4(+). It carries out the reaction UTP + NH4(+) + ATP = CTP + ADP + phosphate + 2 H(+). It functions in the pathway pyrimidine metabolism; CTP biosynthesis via de novo pathway; CTP from UDP: step 2/2. Its activity is regulated as follows. Allosterically activated by GTP, when glutamine is the substrate; GTP has no effect on the reaction when ammonia is the substrate. The allosteric effector GTP functions by stabilizing the protein conformation that binds the tetrahedral intermediate(s) formed during glutamine hydrolysis. Inhibited by the product CTP, via allosteric rather than competitive inhibition. In terms of biological role, catalyzes the ATP-dependent amination of UTP to CTP with either L-glutamine or ammonia as the source of nitrogen. Regulates intracellular CTP levels through interactions with the four ribonucleotide triphosphates. The protein is CTP synthase of Ehrlichia ruminantium (strain Welgevonden).